A 408-amino-acid polypeptide reads, in one-letter code: Cell division protein FtsZ 2 (408 aa).

Residues 130 to 132 (GTG), glutamate 169, arginine 173, and aspartate 216 each bind GTP.

This sequence belongs to the FtsZ family. In terms of assembly, homodimer. Polymerizes to form a dynamic ring structure in a strictly GTP-dependent manner. Interacts directly with several other division proteins.

The protein localises to the cytoplasm. Functionally, essential cell division protein that forms a contractile ring structure (Z ring) at the future cell division site. The regulation of the ring assembly controls the timing and the location of cell division. One of the functions of the FtsZ ring is to recruit other cell division proteins to the septum to produce a new cell wall between the dividing cells. Binds GTP and shows GTPase activity. This chain is Cell division protein FtsZ 2, found in Pyrococcus furiosus (strain ATCC 43587 / DSM 3638 / JCM 8422 / Vc1).